The chain runs to 690 residues: UvrABC system protein B (690 aa).

In terms of domain architecture, Helicase ATP-binding spans E39–E422. G52–T59 lines the ATP pocket. A Beta-hairpin motif is present at residues Y105–I128. Positions Q443–I596 constitute a Helicase C-terminal domain. The 36-residue stretch at A640 to R675 folds into the UVR domain.

The protein belongs to the UvrB family. Forms a heterotetramer with UvrA during the search for lesions. Interacts with UvrC in an incision complex.

The protein localises to the cytoplasm. The UvrABC repair system catalyzes the recognition and processing of DNA lesions. A damage recognition complex composed of 2 UvrA and 2 UvrB subunits scans DNA for abnormalities. Upon binding of the UvrA(2)B(2) complex to a putative damaged site, the DNA wraps around one UvrB monomer. DNA wrap is dependent on ATP binding by UvrB and probably causes local melting of the DNA helix, facilitating insertion of UvrB beta-hairpin between the DNA strands. Then UvrB probes one DNA strand for the presence of a lesion. If a lesion is found the UvrA subunits dissociate and the UvrB-DNA preincision complex is formed. This complex is subsequently bound by UvrC and the second UvrB is released. If no lesion is found, the DNA wraps around the other UvrB subunit that will check the other stand for damage. This is UvrABC system protein B from Dechloromonas aromatica (strain RCB).